The following is a 381-amino-acid chain: MGCLGNSSKTAEDQGVDEKERREANKKIEKQLQKERLAYKATHRLLLLGAGESGKSTIVKQMRILHVNGFNPEEKKQKILDIRKNVKDAIVTIVSAMSTIIPPVPLANPENQFRSDYIKSIAPITDFEYSQEFFDHVKKLWDDEGVKACFERSNEYQLIDCAQYFLERIDSVSLVDYTPTDQDLLRCRVLTSGIFETRFQVDKVNFHMFDVGGQRDERRKWIQCFNDVTAIIYVAACSSYNMVIREDNNTNRLRESLDLFESIWNNRWLRTISIILFLNKQDMLAEKVLAGKSKIEDYFPEYANYTVPEDATPDAGEDPKVTRAKFFIRDLFLRISTATGDGKHYCYPHFTCAVDTENIRRVFNDCRDIIQRMHLKQYELL.

The interval 1 to 25 is disordered; the sequence is MGCLGNSSKTAEDQGVDEKERREAN. Glycine 2 carries N-palmitoyl glycine lipidation. The S-palmitoyl cysteine moiety is linked to residue cysteine 3. Residues 10-25 are compositionally biased toward basic and acidic residues; it reads TAEDQGVDEKERREAN. The G-alpha domain maps to 41-381; that stretch reads ATHRLLLLGA…RMHLKQYELL (341 aa). Positions 44-57 are G1 motif; sequence RLLLLGAGESGKST. Glutamate 52, serine 53, glycine 54, lysine 55, serine 56, and threonine 57 together coordinate GTP. Serine 56 is a Mg(2+) binding site. Position 178 is a phosphothreonine (threonine 178). Residues 183–191 are G2 motif; that stretch reads DLLRCRVLT. Residues leucine 185, arginine 186, and threonine 191 each coordinate GTP. Residues threonine 191 and aspartate 210 each coordinate Mg(2+). A G3 motif region spans residues 206-215; that stretch reads FHMFDVGGQR. GTP contacts are provided by glycine 213, asparagine 279, lysine 280, aspartate 282, and alanine 353. The segment at 275 to 282 is G4 motif; sequence ILFLNKQD. The tract at residues 351–356 is G5 motif; sequence TCAVDT.

The protein belongs to the G-alpha family. G(s) subfamily. In terms of assembly, g proteins are composed of 3 units; alpha, beta and gamma. The alpha chain contains the guanine nucleotide binding site. Interacts with GAS2L2. Interacts (GDP-bound form) with RIC8B (via C-terminus); promoting GNAL folding and association with the plasma membrane.

Its subcellular location is the cell membrane. The catalysed reaction is GTP + H2O = GDP + phosphate + H(+). Guanine nucleotide-binding protein (G protein) involved as transducer in olfactory signal transduction controlled by G protein-coupled receptors (GPCRs). Contains the guanine nucleotide binding site and alternates between an active, GTP-bound state and an inactive, GDP-bound state. Signaling by an activated GPCR promotes GDP release and GTP binding. The alpha subunit has a low GTPase activity that converts bound GTP to GDP, thereby terminating the signal. Both GDP release and GTP hydrolysis are modulated by numerous regulatory proteins. GNAL/G(olf) alpha specifically mediates olfactory signal transduction within the olfactory neuroepithelium and the basal ganglia following GPCRs activation. Acts by promoting the specific activation of adenylyl cyclase ADCY3, resulting in increased levels of the signaling molecule cAMP. The protein is Guanine nucleotide-binding protein G(olf) subunit alpha of Mus musculus (Mouse).